Consider the following 353-residue polypeptide: Photosystem II protein D1 (353 aa).

Position 2 is an N-acetylthreonine (T2). T2 is subject to Phosphothreonine. 3 helical membrane passes run 29-46 (YIGW…TATS), 118-133 (HFLL…EWEL), and 142-156 (WIAV…AATA). H118 serves as a coordination point for chlorophyll a. Y126 is a pheophytin a binding site. 2 residues coordinate [CaMn4O5] cluster: D170 and E189. A helical membrane pass occupies residues 197-218 (FHMLGVAGVFGGSLFSAMHGSL). Residue H198 participates in chlorophyll a binding. A quinone-binding positions include H215 and 264–265 (SF). Position 215 (H215) interacts with Fe cation. H272 provides a ligand contact to Fe cation. Residues 274 to 288 (FLAAWPVAGIWFTAL) traverse the membrane as a helical segment. H332, E333, D342, and A344 together coordinate [CaMn4O5] cluster. A propeptide spanning residues 345–353 (AVESISIGG) is cleaved from the precursor.

The protein belongs to the reaction center PufL/M/PsbA/D family. PSII is composed of 1 copy each of membrane proteins PsbA, PsbB, PsbC, PsbD, PsbE, PsbF, PsbH, PsbI, PsbJ, PsbK, PsbL, PsbM, PsbT, PsbX, PsbY, PsbZ, Psb30/Ycf12, at least 3 peripheral proteins of the oxygen-evolving complex and a large number of cofactors. It forms dimeric complexes. The D1/D2 heterodimer binds P680, chlorophylls that are the primary electron donor of PSII, and subsequent electron acceptors. It shares a non-heme iron and each subunit binds pheophytin, quinone, additional chlorophylls, carotenoids and lipids. D1 provides most of the ligands for the Mn4-Ca-O5 cluster of the oxygen-evolving complex (OEC). There is also a Cl(-1) ion associated with D1 and D2, which is required for oxygen evolution. The PSII complex binds additional chlorophylls, carotenoids and specific lipids. is required as a cofactor. Post-translationally, tyr-161 forms a radical intermediate that is referred to as redox-active TyrZ, YZ or Y-Z. C-terminally processed by CTPA; processing is essential to allow assembly of the oxygen-evolving complex and thus photosynthetic growth.

It localises to the plastid. It is found in the chloroplast thylakoid membrane. It catalyses the reaction 2 a plastoquinone + 4 hnu + 2 H2O = 2 a plastoquinol + O2. Functionally, photosystem II (PSII) is a light-driven water:plastoquinone oxidoreductase that uses light energy to abstract electrons from H(2)O, generating O(2) and a proton gradient subsequently used for ATP formation. It consists of a core antenna complex that captures photons, and an electron transfer chain that converts photonic excitation into a charge separation. The D1/D2 (PsbA/PsbD) reaction center heterodimer binds P680, the primary electron donor of PSII as well as several subsequent electron acceptors. This chain is Photosystem II protein D1, found in Pinus koraiensis (Korean pine).